The following is a 517-amino-acid chain: Maturase K (517 aa).

Belongs to the intron maturase 2 family. MatK subfamily.

Its subcellular location is the plastid. It is found in the chloroplast. In terms of biological role, usually encoded in the trnK tRNA gene intron. Probably assists in splicing its own and other chloroplast group II introns. The sequence is that of Maturase K from Dracula chimaera.